The chain runs to 88 residues: Small ribosomal subunit protein uS15c (88 aa).

The protein belongs to the universal ribosomal protein uS15 family. In terms of assembly, part of the 30S ribosomal subunit.

The protein localises to the plastid. It is found in the chloroplast. The chain is Small ribosomal subunit protein uS15c (rps15) from Lobularia maritima (Sweet alyssum).